The primary structure comprises 145 residues: Large-conductance mechanosensitive channel (145 aa).

A run of 3 helical transmembrane segments spans residues 14–34, 38–58, and 81–101; these read VMDL…VKSL, LIMP…YFLP, and GSFL…FLMV.

Belongs to the MscL family. Homopentamer.

The protein localises to the cell inner membrane. In terms of biological role, channel that opens in response to stretch forces in the membrane lipid bilayer. May participate in the regulation of osmotic pressure changes within the cell. In Rhizobium johnstonii (strain DSM 114642 / LMG 32736 / 3841) (Rhizobium leguminosarum bv. viciae), this protein is Large-conductance mechanosensitive channel.